A 628-amino-acid polypeptide reads, in one-letter code: Junctophilin-4 (628 aa).

Over 1 to 606 the chain is Cytoplasmic; the sequence is MSPGGKFDFD…RPAQPGAANP (606 aa). MORN repeat units lie at residues 50–72, 74–95, 96–117, 118–140, 141–163, and 164–186; these read LGVF…KREG, GVER…KGRS, GVWE…FQDG, YGTE…KRHG, YGVR…RTSL, and DSGH…EGGS. Disordered regions lie at residues 158-214 and 231-276; these read PRRT…RTPA and GGRR…LIEG. A compositionally biased stretch (pro residues) spans 170–179; it reads PPTPPPPLPL. Low complexity-rich tracts occupy residues 231-241 and 253-272; these read GGRRSSLGSKR and GSTG…APPA. 2 MORN repeats span residues 317-339 and 340-362; these read YGRT…RLVH and GGRV…KVDR. The interval 415 to 602 is disordered; sequence DLQPMLEAPG…AATERPAQPG (188 aa). The span at 432–443 shows a compositional bias: acidic residues; it reads EGSDTEPLDEDS. 2 stretches are compositionally biased toward low complexity: residues 453–467 and 528–541; these read PSEG…PASS and GSPL…SSGS. A helical; Anchor for type IV membrane protein transmembrane segment spans residues 607–628; that stretch reads LVVGAVALLDLSLAFLFSQLLT.

This sequence belongs to the junctophilin family.

Its subcellular location is the cell membrane. The protein resides in the endoplasmic reticulum membrane. Junctophilins contribute to the formation of junctional membrane complexes (JMCs) which link the plasma membrane with the endoplasmic or sarcoplasmic reticulum in excitable cells. Provides a structural foundation for functional cross-talk between the cell surface and intracellular calcium release channels. JPH4 is brain-specific and appears to have an active role in certain neurons involved in motor coordination and memory. The sequence is that of Junctophilin-4 (JPH4) from Homo sapiens (Human).